We begin with the raw amino-acid sequence, 858 residues long: Ubiquitin carboxyl-terminal hydrolase 13 (858 aa).

Position 112 is a phosphoserine (Ser-112). A UBP-type; degenerate zinc finger spans residues 185-293 (PVSKYANNLV…KHLAHFGIDM (109 aa)). Zn(2+) is bound by residues Cys-209, Cys-212, Cys-229, and His-242. Residue Lys-309 forms a Glycyl lysine isopeptide (Lys-Gly) (interchain with G-Cter in SUMO2) linkage. The region spanning 334–856 (TGLKNLGNSC…LGYMYFYRRI (523 aa)) is the USP domain. Residue Cys-343 is the Nucleophile of the active site. Residue Lys-403 forms a Glycyl lysine isopeptide (Lys-Gly) (interchain with G-Cter in SUMO2) linkage. 2 UBA domains span residues 650 to 691 (DIDE…IIVH) and 722 to 762 (QPPE…IFSH). The active-site Proton acceptor is His-818.

The protein belongs to the peptidase C19 family. As to quaternary structure, interacts with UFD1. Interacts (via UBA domains) with SIAH2 (when ubiquitinated). Interacts with BAG6; the interaction is direct and may mediate UBL4A deubiquitination. Interacts (via UBA 2 domain) with AMFR; the interaction is direct. Interacts with UBL4A; may be indirect via BAG6. Interacts with NEDD4.

The protein resides in the cytoplasm. It catalyses the reaction Thiol-dependent hydrolysis of ester, thioester, amide, peptide and isopeptide bonds formed by the C-terminal Gly of ubiquitin (a 76-residue protein attached to proteins as an intracellular targeting signal).. Specifically inhibited by spautin-1 (specific and potent autophagy inhibitor-1), a derivative of MBCQ that binds to USP13 and inhibits deubiquitinase activity. Regulated by PIK3C3/VPS34-containing complexes. The weak deubiquitinase activity in vitro suggests the existence of some mechanism that activates the enzyme. Deubiquitinase that mediates deubiquitination of target proteins such as BECN1, MITF, SKP2 and USP10 and is involved in various processes such as autophagy, endoplasmic reticulum-associated degradation (ERAD), cell cycle progression or DNA damage response. Component of a regulatory loop that controls autophagy and p53/TP53 levels: mediates deubiquitination of BECN1, a key regulator of autophagy, leading to stabilize the PIK3C3/VPS34-containing complexes. Alternatively, forms with NEDD4 a deubiquitination complex, which subsequently stabilizes VPS34 to promote autophagy. Also deubiquitinates USP10, an essential regulator of p53/TP53 stability. In turn, PIK3C3/VPS34-containing complexes regulate USP13 stability, suggesting the existence of a regulatory system by which PIK3C3/VPS34-containing complexes regulate p53/TP53 protein levels via USP10 and USP13. Recruited by nuclear UFD1 and mediates deubiquitination of SKP2, thereby regulating endoplasmic reticulum-associated degradation (ERAD). Also regulates ERAD through the deubiquitination of UBL4A a component of the BAG6/BAT3 complex. Mediates stabilization of SIAH2 independently of deubiquitinase activity: binds ubiquitinated SIAH2 and acts by impairing SIAH2 autoubiquitination. Regulates the cell cycle progression by stabilizing cell cycle proteins such as SKP2 and AURKB. In addition, plays an important role in maintaining genomic stability and in DNA replication checkpoint activation via regulation of RAP80 and TOPBP1. Deubiquitinates the multifunctional protein HMGB1 and subsequently drives its nucleocytoplasmic localization and its secretion. Positively regulates type I and type II interferon signalings by deubiquitinating STAT1 but negatively regulates antiviral response by deubiquitinating STING1. The protein is Ubiquitin carboxyl-terminal hydrolase 13 (Usp13) of Mus musculus (Mouse).